The chain runs to 121 residues: Ribonuclease P protein component (121 aa).

It belongs to the RnpA family. Consists of a catalytic RNA component (M1 or rnpB) and a protein subunit.

It carries out the reaction Endonucleolytic cleavage of RNA, removing 5'-extranucleotides from tRNA precursor.. Its function is as follows. RNaseP catalyzes the removal of the 5'-leader sequence from pre-tRNA to produce the mature 5'-terminus. It can also cleave other RNA substrates such as 4.5S RNA. The protein component plays an auxiliary but essential role in vivo by binding to the 5'-leader sequence and broadening the substrate specificity of the ribozyme. In Neisseria meningitidis serogroup A / serotype 4A (strain DSM 15465 / Z2491), this protein is Ribonuclease P protein component.